Here is a 568-residue protein sequence, read N- to C-terminus: Keratin, type I cytoskeletal 10 (568 aa).

Low complexity predominate over residues 1-15 (MSVRYSSSKQYSSSR). The segment at 1–31 (MSVRYSSSKQYSSSRSGGGGGGGGGSSFRIS) is disordered. The segment at 1–135 (MSVRYSSSKQ…GGDGGLLSGN (135 aa)) is head. S14, S16, S36, S47, S50, and S160 each carry phosphoserine. Gly residues predominate over residues 16–26 (SGGGGGGGGGS). The segment at 136–171 (EKVTMQNLNDRLASYLDKVRALEESNYELEGKIKEW) is coil 1A. In terms of domain architecture, IF rod spans 136–450 (EKVTMQNLND…SLLEGEGSSG (315 aa)). The tract at residues 172 to 192 (YEKHGNSSQRAPRDYSKYYQT) is linker 1. Positions 193-284 (IEDLKNQILN…KNHEEEMRDL (92 aa)) are coil 1B. Residues 285–307 (QNVSTGDVNVEMNAAPGVDLTEL) are linker 12. Residues 308 to 446 (LNNMRNQYEQ…QTYRSLLEGE (139 aa)) are coil 2. The tract at residues 447–568 (GSSGGGGYGG…GESSSKGPRY (122 aa)) is tail. Gly residues predominate over residues 485–546 (GGGSSGGGGH…GGGYGGGSSS (62 aa)). A disordered region spans residues 485 to 568 (GGGSSGGGGH…GESSSKGPRY (84 aa)). The span at 547-568 (SGGHKSSSSGSVGESSSKGPRY) shows a compositional bias: low complexity.

The protein belongs to the intermediate filament family. In terms of assembly, heterotetramer of two type I and two type II keratins. Heterodimer with KRT1. Two heterodimers of KRT1 and KRT10 form a heterotetramer. The KRT10 subunit in the heterotetramer is probably disulfide-linked. As to expression, expressed in skin.

The protein localises to the secreted. It is found in the extracellular space. The protein resides in the cell surface. Its subcellular location is the cytoplasm. In terms of biological role, plays a role in the establishment of the epidermal barrier on plantar skin. Involved in the maintenance of cell layer development and keratin filament bundles in suprabasal cells of the epithelium. This is Keratin, type I cytoskeletal 10 from Canis lupus familiaris (Dog).